Consider the following 377-residue polypeptide: Nucleoside diphosphate kinase homolog 7 (377 aa).

The 89-residue stretch at 3 to 91 (HSERFVFIAE…YTARQLGSKK (89 aa)) folds into the DM10 domain.

It belongs to the NDK family. As to quaternary structure, component of sperm flagellar doublet microtubules. Component of the gamma-tubulin ring complex. In terms of tissue distribution, expressed in trachea multiciliated cells.

It localises to the cytoplasm. It is found in the cytoskeleton. The protein resides in the microtubule organizing center. The protein localises to the centrosome. Its subcellular location is the nucleus. It localises to the spindle. It is found in the cilium axoneme. The protein resides in the flagellum axoneme. The protein localises to the cell projection. Its subcellular location is the cilium. In terms of biological role, possesses an intrinsic kinase activity. Displays 3'-5' exonuclease activity with a preference for single-stranded DNA. Does not seem to have nucleoside diphosphate kinase activity. Functional component of the gamma-tubulin ring complex, implicated in the regulation of the microtubule-nucleating activity of the gamma-tubulin ring complex in centrosomes, in a kinase activity-dependent manner. Part of the dynein-decorated doublet microtubules (DMTs) in cilia axoneme, which is required for motile cilia beating. This Bos taurus (Bovine) protein is Nucleoside diphosphate kinase homolog 7 (NME7).